The chain runs to 258 residues: MTVAVFFGCTFIAFGPAIALFMFTIARDPLRVIFLIAGAFFWLVSLLLSSLVWFITVQISNKNSATQQRGLLIFGVVLSVLLQEAFRYGYYRLLKKANEGLLALSQEDTMPISMRQLAYVSGLGFGFMSGAFSVVNILSDSLGPGTVGIHGESQHYFISSAFMTLAIILLHMFWGVVFFEACERQRWWALGAVVASHLVVSCLTFVNPHYQGSLIPTYIILSVMAVWAYLCAGGSLRNLKLCLTCKDKDFLLANHRPR.

7 helical membrane passes run 3–23 (VAVF…LFMF), 32–52 (VIFL…SSLV), 70–90 (GLLI…RYGY), 118–138 (AYVS…VNIL), 161–181 (AFMT…FFEA), 187–207 (WWAL…TFVN), and 214–234 (LIPT…CAGG).

Belongs to the APH-1 family. As to quaternary structure, component of the gamma-secretase complex, a complex composed of a presenilin homodimer (PSEN1 or PSEN2), nicastrin (NCSTN), APH1 and PEN2.

The protein localises to the membrane. Functionally, essential subunit of the gamma-secretase complex, an endoprotease complex that catalyzes the intramembrane cleavage of integral proteins such as Notch receptors. It may represent a stabilizing cofactor for the presenilin homodimer that promotes the formation of a stable complex. The protein is Gamma-secretase subunit Aph-1b (aph1b) of Danio rerio (Zebrafish).